The chain runs to 180 residues: Large ribosomal subunit protein uL5 (180 aa).

This sequence belongs to the universal ribosomal protein uL5 family. In terms of assembly, part of the 50S ribosomal subunit; part of the 5S rRNA/L5/L18/L25 subcomplex. Contacts the 5S rRNA and the P site tRNA. Forms a bridge to the 30S subunit in the 70S ribosome.

In terms of biological role, this is one of the proteins that bind and probably mediate the attachment of the 5S RNA into the large ribosomal subunit, where it forms part of the central protuberance. In the 70S ribosome it contacts protein S13 of the 30S subunit (bridge B1b), connecting the 2 subunits; this bridge is implicated in subunit movement. Contacts the P site tRNA; the 5S rRNA and some of its associated proteins might help stabilize positioning of ribosome-bound tRNAs. This is Large ribosomal subunit protein uL5 from Chlamydia trachomatis serovar L2 (strain ATCC VR-902B / DSM 19102 / 434/Bu).